Consider the following 766-residue polypeptide: Slit homolog 2 protein (766 aa).

The first 30 residues, 1–30, serve as a signal peptide directing secretion; that stretch reads MSGIGWQTLSLSLALVLSILNKVAPHACPA. The region spanning 31 to 55 is the LRRNT domain; sequence QCSCSGSTVDCHGLALRIVPRNIPR. LRR repeat units lie at residues 56-77, 80-101, 104-125, 128-149, 152-173, and 176-197; these read NTER…DFAG, HLRI…AFHD, ELER…LFLG, KLYR…AFRG, DIKN…AFRA, and DLEV…SFNH. Asn66 carries an N-linked (GlcNAc...) asparagine glycan. The N-linked (GlcNAc...) asparagine glycan is linked to Asn186. Residues 209-259 enclose the LRRCT 1 domain; the sequence is NNLYCDCHLAWLSDWLRQRPRVGLYTQCMGPSHLRGHNVAEVQKREFVCSD. Residues 268-304 form the LRRNT 2 domain; the sequence is MAPSCSVLHCPIACTCSNNIVDCRGKGLTEIPTNLPE. Cys281 and Cys290 are joined by a disulfide. LRR repeat units follow at residues 305 to 326, 329 to 350, 353 to 374, 377 to 398, and 401 to 422; these read TITE…AFSP, KLRR…AFQG, SLNS…LFEG, SLQL…AFQD, and NLNL…TFSA. The LRRCT 2 domain maps to 434-484; the sequence is NPFICDCHLKWLADYLHTNPIETSGARCTSPRRLANKRIGQIKSKKFRCSG. Cystine bridges form between Cys438/Cys461, Cys440/Cys482, Cys502/Cys508, and Cys506/Cys515. Residues 493–529 enclose the LRRNT 3 domain; the sequence is SGDCFADLACPEKCRCEGTTVDCSNQKLNKIPDHIPQ. 5 LRR repeats span residues 530-551, 555-576, 579-600, 603-624, and 627-648; these read YTAE…GIFK, QLRK…AFEG, GVNE…MFKG, SLKT…SFTG, and SVRL…AFGT. The N-linked (GlcNAc...) asparagine glycan is linked to Asn560. A glycan (N-linked (GlcNAc...) asparagine) is linked at Asn619. In terms of domain architecture, LRRCT 3 spans 660-710; the sequence is NPFNCNCHLAWLGEWLRRKRIVTGNPRCQKPYFLKEIPIQDVAIQDFTCDD. Intrachain disulfides connect Cys664–Cys687, Cys666–Cys708, Cys723–Cys729, and Cys727–Cys736. One can recognise an LRRNT 4 domain in the interval 714–750; it reads DNSCSPLSRCPSECTCLDTVVRCSNKGLKVLPKGIPR.

As to quaternary structure, homodimer. Binds ROBO1 and ROBO2 with high affinity. Interacts with GREM1.

Its subcellular location is the secreted. In terms of biological role, thought to act as molecular guidance cue in cellular migration, and function appears to be mediated by interaction with roundabout homolog receptors. During neural development involved in axonal navigation at the ventral midline of the neural tube and projection of axons to different regions. SLIT1 and SLIT2 seem to be essential for midline guidance in the forebrain by acting as repulsive signal preventing inappropriate midline crossing by axons projecting from the olfactory bulb. In spinal cord development may play a role in guiding commissural axons once they reached the floor plate by modulating the response to netrin. In vitro, silences the attractive effect of NTN1 but not its growth-stimulatory effect and silencing requires the formation of a ROBO1-DCC complex. May be implicated in spinal cord midline post-crossing axon repulsion. In vitro, only commissural axons that crossed the midline responded to SLIT2. In the developing visual system appears to function as repellent for retinal ganglion axons by providing a repulsion that directs these axons along their appropriate paths prior to, and after passage through, the optic chiasm. In vitro, collapses and repels retinal ganglion cell growth cones. Seems to play a role in branching and arborization of CNS sensory axons, and in neuronal cell migration. Seems to be involved in regulating leukocyte migration. This Rattus norvegicus (Rat) protein is Slit homolog 2 protein (Slit2).